A 77-amino-acid chain; its full sequence is Large ribosomal subunit protein bL28 (77 aa).

The tract at residues 1 to 26 is disordered; that stretch reads MARVCKVTGKRPMSGNNVSHANNKTK.

This sequence belongs to the bacterial ribosomal protein bL28 family.

This is Large ribosomal subunit protein bL28 from Neisseria gonorrhoeae (strain ATCC 700825 / FA 1090).